Reading from the N-terminus, the 85-residue chain is U4-theraphotoxin-Hhn1h (85 aa).

An N-terminal signal peptide occupies residues 1-22 (MKVTLIAILTCAAVLVLHTTAA). Positions 23-48 (EELEAESQLMEVGMPDTELAAVDEER) are excised as a propeptide. 3 disulfides stabilise this stretch: Cys-52-Cys-66, Cys-56-Cys-77, and Cys-71-Cys-82.

Belongs to the neurotoxin 12 (Hwtx-2) family. 02 (Hwtx-2) subfamily. In terms of tissue distribution, expressed by the venom gland.

It is found in the secreted. Functionally, postsynaptic neurotoxin. This is U4-theraphotoxin-Hhn1h from Cyriopagopus hainanus (Chinese bird spider).